Here is a 399-residue protein sequence, read N- to C-terminus: Accessory Sec system protein translocase subunit SecY2 (399 aa).

Helical transmembrane passes span 14–34 (IFFT…SIVS), 60–80 (LNIF…LTLI), 102–122 (ALTL…YINK), 128–148 (SNML…VWLA), 152–172 (TTYG…KSIF), 183–203 (ASLI…LFFI), 237–257 (ISIM…NFIG), 272–292 (FTNP…GYFL), 335–355 (WFGS…ALLV), and 362–382 (VYFT…AETI).

It belongs to the SecY/SEC61-alpha family. SecY2 subfamily. In terms of assembly, component of the accessory SecA2/SecY2 protein translocase complex required to export cell wall proteins. May form heterotrimers with SecE and SecG subunits.

It localises to the cell membrane. Functionally, part of the accessory SecA2/SecY2 system specifically required for export of possible cell wall proteins. The central subunit of a protein translocation channel. This chain is Accessory Sec system protein translocase subunit SecY2, found in Staphylococcus epidermidis (strain ATCC 12228 / FDA PCI 1200).